A 179-amino-acid chain; its full sequence is Large ribosomal subunit protein uL5 (179 aa).

This sequence belongs to the universal ribosomal protein uL5 family. In terms of assembly, part of the 50S ribosomal subunit; part of the 5S rRNA/L5/L18/L25 subcomplex. Contacts the 5S rRNA and the P site tRNA. Forms a bridge to the 30S subunit in the 70S ribosome.

Its function is as follows. This is one of the proteins that bind and probably mediate the attachment of the 5S RNA into the large ribosomal subunit, where it forms part of the central protuberance. In the 70S ribosome it contacts protein S13 of the 30S subunit (bridge B1b), connecting the 2 subunits; this bridge is implicated in subunit movement. Contacts the P site tRNA; the 5S rRNA and some of its associated proteins might help stabilize positioning of ribosome-bound tRNAs. The sequence is that of Large ribosomal subunit protein uL5 from Prochlorococcus marinus (strain AS9601).